The primary structure comprises 269 residues: tRNA (guanine-N(7)-)-methyltransferase (269 aa).

Positions 1–38 are disordered; the sequence is MDGVNDAANHTVESVPGRPSTASAPLEAGRRSPTGSRL. S-adenosyl-L-methionine-binding residues include Glu91, Glu116, Asp143, and Asp166. The active site involves Asp166. Substrate-binding positions include Lys170, Asp202, and 247–250; that span reads TKFE.

This sequence belongs to the class I-like SAM-binding methyltransferase superfamily. TrmB family.

The catalysed reaction is guanosine(46) in tRNA + S-adenosyl-L-methionine = N(7)-methylguanosine(46) in tRNA + S-adenosyl-L-homocysteine. It participates in tRNA modification; N(7)-methylguanine-tRNA biosynthesis. Functionally, catalyzes the formation of N(7)-methylguanine at position 46 (m7G46) in tRNA. In Nocardia farcinica (strain IFM 10152), this protein is tRNA (guanine-N(7)-)-methyltransferase.